Reading from the N-terminus, the 178-residue chain is MSTRKLQKRKILPNDSIYNSLLVSQTINKILSKGKKNIARYIFYKSMQNIEKIKNENPLDIFKKAVDNATPSIELRTQKRKKGQISKISIKTKLERRNKIALKFIINSAKKRSEKNIIQKLQGEILDAYNNTGAAVQKKEEIEKSKSPVNNNKKFISKNKKSKNKKQKKRLKRKKNIY.

Over residues 137–146 (QKKEEIEKSK) the composition is skewed to basic and acidic residues. The interval 137 to 178 (QKKEEIEKSKSPVNNNKKFISKNKKSKNKKQKKRLKRKKNIY) is disordered. Positions 155 to 178 (FISKNKKSKNKKQKKRLKRKKNIY) are enriched in basic residues.

Belongs to the universal ribosomal protein uS7 family. As to quaternary structure, part of the 30S ribosomal subunit.

The protein resides in the plastid. In terms of biological role, one of the primary rRNA binding proteins, it binds directly to 16S rRNA where it nucleates assembly of the head domain of the 30S subunit. The sequence is that of Small ribosomal subunit protein uS7c (rps7) from Euglena longa (Euglenophycean alga).